The primary structure comprises 80 residues: Metallothionein-like protein type 2 (80 aa).

This sequence belongs to the metallothionein superfamily. Type 15 family.

Its function is as follows. Metallothioneins have a high content of cysteine residues that bind various heavy metals. The chain is Metallothionein-like protein type 2 (MTI) from Ricinus communis (Castor bean).